Consider the following 317-residue polypeptide: tRNA pseudouridine synthase B (317 aa).

Aspartate 47 acts as the Nucleophile in catalysis.

This sequence belongs to the pseudouridine synthase TruB family. Type 1 subfamily.

The catalysed reaction is uridine(55) in tRNA = pseudouridine(55) in tRNA. Responsible for synthesis of pseudouridine from uracil-55 in the psi GC loop of transfer RNAs. This is tRNA pseudouridine synthase B from Vibrio atlanticus (strain LGP32) (Vibrio splendidus (strain Mel32)).